The following is a 529-amino-acid chain: Beta-hexosaminidase subunit alpha (529 aa).

A signal peptide spans 1–22 (MASSRLWFSLLLAAALAGRATA). A propeptide spanning residues 23–88 (LWPWPQNIQT…PRPYLTGKRH (66 aa)) is cleaved from the precursor. C58 and C104 are disulfide-bonded. 3 N-linked (GlcNAc...) asparagine glycosylation sites follow: N115, N157, and N295. Cysteines 277 and 328 form a disulfide. E323 acts as the Proton donor in catalysis. The tract at residues 423 to 424 (NR) is critical for hydrolysis GM2 gangliosides. C505 and C522 form a disulfide bridge.

It belongs to the glycosyl hydrolase 20 family. As to quaternary structure, there are 3 beta-hexosaminidase isozymes: isozyme A (hexosaminidase A) is a heterodimer composed of one subunit alpha and one subunit beta (chain A and B); isozyme B (hexosaminidase B) is a homodimer of two beta subunits (two chains A and B); isozyme S (hexosaminidase S) is a homodimer of two alpha subunits. The composition of the dimer (isozyme A versus isozyme S) has a significant effect on the substrate specificity of the alpha subunit active site.

It localises to the lysosome. It catalyses the reaction Hydrolysis of terminal non-reducing N-acetyl-D-hexosamine residues in N-acetyl-beta-D-hexosaminides.. The enzyme catalyses N-acetyl-beta-D-galactosaminyl-(1-&gt;4)-beta-D-3-sulfogalactosyl-(1-&gt;4)-beta-D-glucosyl-(1&lt;-&gt;1')-ceramide + H2O = a beta-D-3-sulfogalactosyl-(1-&gt;4)-beta-D-glucosyl-(1&lt;-&gt;1')-ceramide + N-acetyl-beta-D-galactosamine. It carries out the reaction a ganglioside GM2 (d18:1(4E)) + H2O = a ganglioside GM3 (d18:1(4E)) + N-acetyl-beta-D-galactosamine. The catalysed reaction is a ganglioside GM2 + H2O = a ganglioside GM3 + N-acetyl-beta-D-galactosamine. It catalyses the reaction beta-D-GalNAc-(1-&gt;4)-alpha-L-IdoA-(1-&gt;3)-beta-D-GalNAc-4-sulfate-(1-&gt;4)-alpha-L-IdoA-(1-&gt;3)-D-GalNAc-4-sulfate + H2O = alpha-L-IdoA-(1-&gt;3)-beta-D-GalNAc-4-sulfate-(1-&gt;4)-alpha-L-IdoA-(1-&gt;3)-D-GalNAc-4-sulfate + N-acetyl-D-galactosamine. The enzyme catalyses N-acetyl-beta-D-6-sulfogalactosaminyl-(1-&gt;4)-alpha-L-iduronyl-(1-&gt;3)-N-acetyl-D-6-sulfogalactosamine + H2O = alpha-L-iduronyl-(1-&gt;3)-N-acetyl-D-6-sulfogalactosamine + N-acetyl-D-6-sulfogalactosamine. Its activity is regulated as follows. Addition of GM2A stimulates the hydrolysis of sulfated glycosphingolipid SM2 and the ganglioside GM2. Hydrolyzes the non-reducing end N-acetyl-D-hexosamine and/or sulfated N-acetyl-D-hexosamine of glycoconjugates, such as the oligosaccharide moieties from proteins and neutral glycolipids, or from certain mucopolysaccharides. The isozyme S is as active as the isozyme A on the anionic bis-sulfated glycans, the chondroitin-6-sulfate trisaccharide (C6S-3), and the dermatan sulfate pentasaccharide, and the sulfated glycosphingolipid SM2. The isozyme B does not hydrolyze each of these substrates, however hydrolyzes efficiently neutral oligosaccharide. Only the isozyme A is responsible for the degradation of GM2 gangliosides in the presence of GM2A. The polypeptide is Beta-hexosaminidase subunit alpha (Pongo abelii (Sumatran orangutan)).